Consider the following 452-residue polypeptide: Sulfide:quinone oxidoreductase, mitochondrial (452 aa).

FAD is bound by residues Ala-54–Gly-55, Glu-77, Gln-85, and Val-120. The Cysteine persulfide intermediate role is filled by Cys-204. A disulfide bridge links Cys-204 with Cys-380. FAD contacts are provided by residues Asp-337 and Lys-345 to Ala-348. The Cysteine persulfide intermediate role is filled by Cys-380.

It belongs to the SQRD family. The cofactor is FAD.

It is found in the mitochondrion. The catalysed reaction is ubiquinone-10 + hydrogen sulfide + sulfite + 2 H(+) = ubiquinol-10 + thiosulfate. It catalyses the reaction a quinone + hydrogen sulfide + glutathione + H(+) = S-sulfanylglutathione + a quinol. Its function is as follows. Catalyzes the oxidation of hydrogen sulfide, with the help of a quinone. The polypeptide is Sulfide:quinone oxidoreductase, mitochondrial (Dictyostelium discoideum (Social amoeba)).